We begin with the raw amino-acid sequence, 599 residues long: Elongation factor 4 (599 aa).

Residues 5 to 187 (SHIRNFSIIA…RLVQTIPAPT (183 aa)) form the tr-type G domain. GTP contacts are provided by residues 17-22 (DHGKST) and 134-137 (NKMD).

This sequence belongs to the TRAFAC class translation factor GTPase superfamily. Classic translation factor GTPase family. LepA subfamily.

Its subcellular location is the cell inner membrane. It catalyses the reaction GTP + H2O = GDP + phosphate + H(+). Its function is as follows. Required for accurate and efficient protein synthesis under certain stress conditions. May act as a fidelity factor of the translation reaction, by catalyzing a one-codon backward translocation of tRNAs on improperly translocated ribosomes. Back-translocation proceeds from a post-translocation (POST) complex to a pre-translocation (PRE) complex, thus giving elongation factor G a second chance to translocate the tRNAs correctly. Binds to ribosomes in a GTP-dependent manner. This is Elongation factor 4 from Ectopseudomonas mendocina (strain ymp) (Pseudomonas mendocina).